Reading from the N-terminus, the 183-residue chain is uncharacterized protein (183 aa).

The disordered stretch occupies residues 136-183; that stretch reads EPPASVPSKQSGRSDKKKSTRKSPTFRNRPDFRKNKGRQLNKTTKQKK. The span at 170 to 183 shows a compositional bias: basic residues; that stretch reads NKGRQLNKTTKQKK.

This is an uncharacterized protein from Homo sapiens (Human).